The primary structure comprises 1492 residues: ATP-binding cassette sub-family C member 10 (1492 aa).

Transmembrane regions (helical) follow at residues 32–52, 70–90, 102–122, 133–153, 172–192, 293–313, 320–340, 391–411, and 414–434; these read LVLS…YLGT, LAAS…VALP, VLAG…LWVL, PLAL…TVLW, LCLL…WAAP, LVGT…VGFL, LSHG…GAVL, LLNF…LAIT, and LLYQ…LLLV. In terms of domain architecture, ABC transmembrane type-1 1 spans 285-563; that stretch reads YLALGLLKLV…FPWVINGLLE (279 aa). At Thr-463 the chain carries Phosphothreonine. Ser-467 bears the Phosphoserine mark. 2 helical membrane-spanning segments follow: residues 507 to 527 and 538 to 558; these read VYLW…TYVL and FTAL…PWVI. One can recognise an ABC transporter 1 domain in the interval 598-824; the sequence is LELHGALFSW…VQAVPKAWAE (227 aa). 633–640 serves as a coordination point for ATP; sequence GKVGCGKS. Positions 825-860 are disordered; it reads NGQESDSATAQSVQNPEKTKEGLEEEQSTSGRLLQE. The span at 826-840 shows a compositional bias: polar residues; that stretch reads GQESDSATAQSVQNP. A run of 6 helical transmembrane segments spans residues 875–895, 933–953, 974–994, 1051–1071, 1153–1173, and 1182–1202; these read AYWK…LLLM, LFSP…VFPL, IAGV…AGTL, AGLL…LLLL, IRLQ…ALVQ, and GLVG…SGLV. The 326-residue stretch at 885–1210 folds into the ABC transmembrane type-1 2 domain; the sequence is ALAILFSLLL…LVSSFTQTEA (326 aa). The region spanning 1246–1479 is the ABC transporter 2 domain; the sequence is VEFQDVVLAY…PHSLFQQLLQ (234 aa). 1280–1287 contacts ATP; that stretch reads GRTGSGKS.

This sequence belongs to the ABC transporter superfamily. ABCC family. Conjugate transporter (TC 3.A.1.208) subfamily. In testis, localized to peritubular myoid cells, Leydig cells, along the basal membrane of Sertoli cells, moderately in the adluminal compartment of the seminiferous tubules, and in vascular endothelial cells. In terms of tissue distribution, specifically expressed in spleen. As to expression, widely expressed.

It localises to the cell membrane. The protein localises to the basolateral cell membrane. The protein resides in the basal cell membrane. The catalysed reaction is ATP + H2O + xenobioticSide 1 = ADP + phosphate + xenobioticSide 2.. It catalyses the reaction an S-substituted glutathione(in) + ATP + H2O = an S-substituted glutathione(out) + ADP + phosphate + H(+). It carries out the reaction 17beta-estradiol 17-O-(beta-D-glucuronate)(in) + ATP + H2O = 17beta-estradiol 17-O-(beta-D-glucuronate)(out) + ADP + phosphate + H(+). The enzyme catalyses leukotriene C4(in) + ATP + H2O = leukotriene C4(out) + ADP + phosphate + H(+). In terms of biological role, ATP-dependent transporter of the ATP-binding cassette (ABC) family that actively extrudes physiological compounds, and xenobiotics from cells. Lipophilic anion transporter that mediates ATP-dependent transport of glucuronide conjugates such as estradiol-17-beta-o-glucuronide and GSH conjugates such as leukotriene C4 (LTC4). May contribute to regulate the transport of organic compounds in testes across the blood-testis-barrier. Mediates multidrug resistance (MDR) in cancer cells by preventing the intracellular accumulation of certain antitumor drugs, such as, docetaxel and paclitaxel. Does not transport glycocholic acid, taurocholic acid, MTX, folic acid, cAMP, or cGMP. The polypeptide is ATP-binding cassette sub-family C member 10 (ABCC10) (Homo sapiens (Human)).